Reading from the N-terminus, the 468-residue chain is MSQGKIVQIIGAVVDVEFQRNEVPKVYHALKVEGTAITLEVQQQLGDGVVRTIALGSTDGLKRNLLATNTERAISVPVGAGTLGRIMDVLGRPIDEAGDVQASDHWEIHRAAPSYEDQSSSTELLETGIKVIDLMCPFAKGGKVGLFGGAGVGKTVNMMELINNIAKAHSGLSVFAGVGERTREGNDFYHEMKDSNVLDKVAMVYGQMNEPPGNRLRVALTGLTMAEYFRDEKDASGKGKDVLLFVDNIYRYTLAGTEVSALLGRMPSAVGYQPTLAEEMGVLQERITSTKSGSITSIQAVYVPADDLTDPSPATTFAHLDSTVTLSRNIASLGIYPAVDPLDSTSRQMDPLVIGHEHYDTAQRVQQTLQKYKELKDIIAILGMDELSEEDKQSVSRARKIERFFSQPFHVAEVFTGSPGKYVSLKDTIRGFKAICDGEYDHLPEQAFYMVGSIEEAVEKANKMSAKA.

An ATP-binding site is contributed by 148 to 155 (GGAGVGKT).

It belongs to the ATPase alpha/beta chains family. F-type ATPases have 2 components, CF(1) - the catalytic core - and CF(0) - the membrane proton channel. CF(1) has five subunits: alpha(3), beta(3), gamma(1), delta(1), epsilon(1). CF(0) has three main subunits: a(1), b(2) and c(9-12). The alpha and beta chains form an alternating ring which encloses part of the gamma chain. CF(1) is attached to CF(0) by a central stalk formed by the gamma and epsilon chains, while a peripheral stalk is formed by the delta and b chains.

It localises to the cell inner membrane. The enzyme catalyses ATP + H2O + 4 H(+)(in) = ADP + phosphate + 5 H(+)(out). Functionally, produces ATP from ADP in the presence of a proton gradient across the membrane. The catalytic sites are hosted primarily by the beta subunits. This Xanthomonas campestris pv. campestris (strain B100) protein is ATP synthase subunit beta.